Here is a 275-residue protein sequence, read N- to C-terminus: NH(3)-dependent NAD(+) synthetase (275 aa).

50–57 (GISGGVDS) is an ATP binding site. D56 lines the Mg(2+) pocket. Residue R147 participates in deamido-NAD(+) binding. Residue T167 coordinates ATP. E172 contacts Mg(2+). Residues K180 and D187 each coordinate deamido-NAD(+). 2 residues coordinate ATP: K196 and T218. 267–268 (HK) lines the deamido-NAD(+) pocket.

It belongs to the NAD synthetase family. In terms of assembly, homodimer.

It catalyses the reaction deamido-NAD(+) + NH4(+) + ATP = AMP + diphosphate + NAD(+) + H(+). It participates in cofactor biosynthesis; NAD(+) biosynthesis; NAD(+) from deamido-NAD(+) (ammonia route): step 1/1. In terms of biological role, catalyzes the ATP-dependent amidation of deamido-NAD to form NAD. Uses ammonia as a nitrogen source. In Ectopseudomonas mendocina (strain ymp) (Pseudomonas mendocina), this protein is NH(3)-dependent NAD(+) synthetase.